Consider the following 172-residue polypeptide: Protein-export protein SecB (172 aa).

This sequence belongs to the SecB family. As to quaternary structure, homotetramer, a dimer of dimers. One homotetramer interacts with 1 SecA dimer.

The protein localises to the cytoplasm. One of the proteins required for the normal export of preproteins out of the cell cytoplasm. It is a molecular chaperone that binds to a subset of precursor proteins, maintaining them in a translocation-competent state. It also specifically binds to its receptor SecA. The sequence is that of Protein-export protein SecB from Maricaulis maris (strain MCS10) (Caulobacter maris).